The sequence spans 498 residues: Myocyte-specific enhancer factor 2D homolog (498 aa).

Positions 1–100 (MGRKKIQIQR…KGFNGCDSPE (100 aa)) are interaction with hdac9. The MADS-box domain occupies 3 to 57 (RKKIQIQRITDERNRQVTFTKRKFGLMKKAYELSVLCDCEIALIIFNHSNKLFQY). The mef2-type DNA-binding region spans 58-86 (ASTDMDKVLLKYTEYNEPHESRTNADIIE). Disordered stretches follow at residues 173 to 215 (LTDP…NSNG), 243 to 267 (LGKV…NSRK), and 411 to 498 (SIKR…AWVT). The segment covering 412-424 (IKREPASPNRERS) has biased composition (basic and acidic residues). 2 stretches are compositionally biased toward polar residues: residues 425–434 (TGTPLSCFSH) and 447–457 (DSLSSNASSFE).

This sequence belongs to the MEF2 family. Binds DNA as a multimer, probably as a dimer. Interacts with hdac9. In terms of tissue distribution, restricted to the somitic mesoderm of early embryos and to the body muscle (myotomes) of the tadpole. Expressed in all tissues examined in the adult.

Its subcellular location is the nucleus. May regulate muscle-specific transcription in the embryo and may regulate transcription of a variety of cell types in the adult. It binds to the sequence 5'-CTA[TA]4TAR-3'. This is Myocyte-specific enhancer factor 2D homolog (mef2d) from Xenopus laevis (African clawed frog).